Consider the following 420-residue polypeptide: Putative FBD-associated F-box protein At1g78730 (420 aa).

Positions 21-71 constitute an F-box domain; it reads LDWLRKLPDSLLCQVFLNLPTKDVVKTSVLSSTWGNIWRSVPGLDLGYGDF. The region spanning 341-390 is the FBD domain; the sequence is ISILPGPQCNLPALEFVDILKPMVEKETELKLMSYFLEKSTILKKLTLRL.

The protein is Putative FBD-associated F-box protein At1g78730 of Arabidopsis thaliana (Mouse-ear cress).